A 635-amino-acid polypeptide reads, in one-letter code: 1-deoxy-D-xylulose-5-phosphate synthase (635 aa).

Residues His-79 and 120–122 each bind thiamine diphosphate; that span reads GHS. Residue Asp-151 participates in Mg(2+) binding. Thiamine diphosphate-binding positions include 152 to 153, Asn-182, Tyr-291, and Glu-372; that span reads GA. Mg(2+) is bound at residue Asn-182.

It belongs to the transketolase family. DXPS subfamily. As to quaternary structure, homodimer. It depends on Mg(2+) as a cofactor. Requires thiamine diphosphate as cofactor.

It carries out the reaction D-glyceraldehyde 3-phosphate + pyruvate + H(+) = 1-deoxy-D-xylulose 5-phosphate + CO2. It participates in metabolic intermediate biosynthesis; 1-deoxy-D-xylulose 5-phosphate biosynthesis; 1-deoxy-D-xylulose 5-phosphate from D-glyceraldehyde 3-phosphate and pyruvate: step 1/1. Its function is as follows. Catalyzes the acyloin condensation reaction between C atoms 2 and 3 of pyruvate and glyceraldehyde 3-phosphate to yield 1-deoxy-D-xylulose-5-phosphate (DXP). The protein is 1-deoxy-D-xylulose-5-phosphate synthase of Xylella fastidiosa (strain M23).